Reading from the N-terminus, the 626-residue chain is DNA mismatch repair protein MutL (626 aa).

Residues 352 to 399 are disordered; it reads QPPSPSFTSRPSSAGYASGSWHPAVSSPRTEWSPQTAHPAHRPLDLGA. Residues 378 to 387 show a composition bias toward polar residues; that stretch reads SPRTEWSPQT.

This sequence belongs to the DNA mismatch repair MutL/HexB family.

Functionally, this protein is involved in the repair of mismatches in DNA. It is required for dam-dependent methyl-directed DNA mismatch repair. May act as a 'molecular matchmaker', a protein that promotes the formation of a stable complex between two or more DNA-binding proteins in an ATP-dependent manner without itself being part of a final effector complex. The sequence is that of DNA mismatch repair protein MutL from Brucella anthropi (strain ATCC 49188 / DSM 6882 / CCUG 24695 / JCM 21032 / LMG 3331 / NBRC 15819 / NCTC 12168 / Alc 37) (Ochrobactrum anthropi).